Consider the following 374-residue polypeptide: Transcription factor IIIA (374 aa).

C2H2-type zinc fingers lie at residues 23–47 (FHCP…LRTH), 53–77 (FVCD…KRCH), 83–107 (FSCH…IEVH), 113–138 (YACT…SACH), 144–169 (YPCT…NRAH), 204–226 (PSCS…VVLH), and 236–261 (YHCP…SVIH). Residues 267-291 (FHCDSCGTKFGYKHMLQRHLERGTC) form a C2H2-type 8; atypical zinc finger. Residues 349 to 374 (YSCSFPECNYRFKRLYDMHRHLNSHH) form a C2H2-type 9 zinc finger.

The protein resides in the nucleus. Is required for correct transcription of 5S RNA genes by RNA polymerase III. Also binds the transcribed 5S RNA's. Initiates transcription of the 5S ribosomal RNA gene. The protein is Transcription factor IIIA (sfc2) of Schizosaccharomyces pombe (strain 972 / ATCC 24843) (Fission yeast).